A 231-amino-acid polypeptide reads, in one-letter code: Somatolactin-2 (231 aa).

The signal sequence occupies residues 1 to 24; it reads MRMMRAIKQGQWAILLWPYLLTTS. Cystine bridges form between cysteine 29-cysteine 39, cysteine 89-cysteine 205, and cysteine 222-cysteine 230. Asparagine 145 is a glycosylation site (N-linked (GlcNAc...) asparagine).

It belongs to the somatotropin/prolactin family. In terms of tissue distribution, pituitary gland.

It is found in the secreted. The sequence is that of Somatolactin-2 from Sparus aurata (Gilthead sea bream).